Consider the following 77-residue polypeptide: Conotoxin VnMEKL-0111 (77 aa).

The signal sequence occupies residues 1-19 (MEKLTILLLVAAVLMSTQA). A propeptide spanning residues 20–46 (LIQHDGEKSQKAKMKFLTARTLSAKTR) is cleaved from the precursor. Cystine bridges form between Cys-50-Cys-66, Cys-57-Cys-71, and Cys-65-Cys-75.

This sequence belongs to the conotoxin O2 superfamily. As to expression, expressed by the venom duct.

The protein resides in the secreted. The protein is Conotoxin VnMEKL-0111 of Conus ventricosus (Mediterranean cone).